Reading from the N-terminus, the 128-residue chain is Large ribosomal subunit protein bL19 (128 aa).

Belongs to the bacterial ribosomal protein bL19 family.

Its function is as follows. This protein is located at the 30S-50S ribosomal subunit interface and may play a role in the structure and function of the aminoacyl-tRNA binding site. The chain is Large ribosomal subunit protein bL19 from Caldicellulosiruptor bescii (strain ATCC BAA-1888 / DSM 6725 / KCTC 15123 / Z-1320) (Anaerocellum thermophilum).